The primary structure comprises 348 residues: Selenide, water dikinase (348 aa).

The active site involves Cys-17. ATP contacts are provided by residues Lys-20 and 47-49 (THD). Asp-50 provides a ligand contact to Mg(2+). ATP-binding positions include Asp-67, Asp-90, and 138 to 140 (GHT). Asp-90 serves as a coordination point for Mg(2+). Asp-226 contributes to the Mg(2+) binding site.

This sequence belongs to the selenophosphate synthase 1 family. Class I subfamily. As to quaternary structure, homodimer. The cofactor is Mg(2+).

It carries out the reaction hydrogenselenide + ATP + H2O = selenophosphate + AMP + phosphate + 2 H(+). In terms of biological role, synthesizes selenophosphate from selenide and ATP. This chain is Selenide, water dikinase, found in Porphyromonas gingivalis (strain ATCC 33277 / DSM 20709 / CIP 103683 / JCM 12257 / NCTC 11834 / 2561).